Reading from the N-terminus, the 307-residue chain is N-acetylmuramic acid 6-phosphate etherase (307 aa).

The 164-residue stretch at Thr-59–Lys-222 folds into the SIS domain. The active-site Proton donor is Glu-87. Residue Glu-118 is part of the active site.

This sequence belongs to the GCKR-like family. MurNAc-6-P etherase subfamily. As to quaternary structure, homodimer.

It carries out the reaction N-acetyl-D-muramate 6-phosphate + H2O = N-acetyl-D-glucosamine 6-phosphate + (R)-lactate. It participates in amino-sugar metabolism; N-acetylmuramate degradation. Its function is as follows. Specifically catalyzes the cleavage of the D-lactyl ether substituent of MurNAc 6-phosphate, producing GlcNAc 6-phosphate and D-lactate. This Trichodesmium erythraeum (strain IMS101) protein is N-acetylmuramic acid 6-phosphate etherase.